We begin with the raw amino-acid sequence, 593 residues long: Glucose-6-phosphate 1-dehydrogenase, chloroplastic (593 aa).

Residues 116–123 (GASGDLAK) and R150 contribute to the NADP(+) site. A disulfide bridge links C168 with C176. K253 provides a ligand contact to NADP(+). Residues K253, 283-287 (HYLGK), E321, and D340 contribute to the D-glucose 6-phosphate site. H345 (proton acceptor) is an active-site residue. NADP(+) is bound at residue K438. D-glucose 6-phosphate is bound by residues K441 and R446. Positions 451 and 480 each coordinate NADP(+). Position 482 (Q482) interacts with D-glucose 6-phosphate. NADP(+)-binding positions include 488-490 (YLK) and R573.

Belongs to the glucose-6-phosphate dehydrogenase family. Homodimer.

The protein resides in the plastid. It localises to the chloroplast. The catalysed reaction is D-glucose 6-phosphate + NADP(+) = 6-phospho-D-glucono-1,5-lactone + NADPH + H(+). The protein operates within carbohydrate degradation; pentose phosphate pathway; D-ribulose 5-phosphate from D-glucose 6-phosphate (oxidative stage): step 1/3. Regulated by metabolites. Post-translationally inactivated by cysteine-mediated redox modification via the ferredoxin-thioredoxin system in the light and this avoids futile cycles with photosynthetic CO2 fixation. Its function is as follows. Catalyzes the rate-limiting step of the oxidative pentose-phosphate pathway, which represents a route for the dissimilation of carbohydrates besides glycolysis. The main function of this enzyme is to provide reducing power (NADPH) and pentose phosphates for fatty acid and nucleic acid synthesis which are involved in membrane synthesis and cell division. In Nicotiana tabacum (Common tobacco), this protein is Glucose-6-phosphate 1-dehydrogenase, chloroplastic.